The chain runs to 582 residues: uncharacterized protein (582 aa).

Residues Gly-20–Val-40 form a helical membrane-spanning segment.

It localises to the membrane. This is an uncharacterized protein from Mycoplasma pneumoniae (strain ATCC 29342 / M129 / Subtype 1) (Mycoplasmoides pneumoniae).